The sequence spans 602 residues: Elongation factor 4 (602 aa).

Positions Ser-7 to Gln-189 constitute a tr-type G domain. Residues Asp-19–Thr-24 and Asn-136–Asp-139 each bind GTP.

The protein belongs to the TRAFAC class translation factor GTPase superfamily. Classic translation factor GTPase family. LepA subfamily.

The protein localises to the cell inner membrane. It catalyses the reaction GTP + H2O = GDP + phosphate + H(+). Required for accurate and efficient protein synthesis under certain stress conditions. May act as a fidelity factor of the translation reaction, by catalyzing a one-codon backward translocation of tRNAs on improperly translocated ribosomes. Back-translocation proceeds from a post-translocation (POST) complex to a pre-translocation (PRE) complex, thus giving elongation factor G a second chance to translocate the tRNAs correctly. Binds to ribosomes in a GTP-dependent manner. This is Elongation factor 4 from Prochlorococcus marinus (strain MIT 9312).